A 71-amino-acid polypeptide reads, in one-letter code: Beta-defensin 2 (71 aa).

Positions 1–20 are cleaved as a signal peptide; that stretch reads MRTLCSLLLICCLLFSYTTP. 3 disulfides stabilise this stretch: C37–C66, C44–C59, and C49–C67.

This sequence belongs to the beta-defensin family. Kidney, uterus and to a lesser extent in heart.

Its subcellular location is the secreted. Has bactericidal activity. This is Beta-defensin 2 (Defb2) from Mus musculus (Mouse).